The primary structure comprises 578 residues: Probable arginine--tRNA ligase, mitochondrial (578 aa).

Residues 1–16 (MACGFRRAIACQLSRV) constitute a mitochondrion transit peptide. Residues 133-135 (SPN), histidine 144, tyrosine 322, aspartate 326, and glutamine 350 each bind L-arginine. The short motif at 133–144 (SPNVAKKFHVGH) is the 'HIGH' region element. The residue at position 568 (lysine 568) is an N6-acetyllysine.

The protein belongs to the class-I aminoacyl-tRNA synthetase family.

Its subcellular location is the mitochondrion membrane. The enzyme catalyses tRNA(Arg) + L-arginine + ATP = L-arginyl-tRNA(Arg) + AMP + diphosphate. Functionally, catalyzes the attachment of arginine to tRNA(Arg) in a two-step reaction: arginine is first activated by ATP to form Arg-AMP and then transferred to the acceptor end of tRNA(Arg). The polypeptide is Probable arginine--tRNA ligase, mitochondrial (RARS2) (Homo sapiens (Human)).